Reading from the N-terminus, the 215-residue chain is Thiamine-phosphate synthase 1 (215 aa).

4-amino-2-methyl-5-(diphosphooxymethyl)pyrimidine contacts are provided by residues 35–39 and asparagine 67; that span reads QYRFE. 2 residues coordinate Mg(2+): aspartate 68 and aspartate 87. Threonine 106 contacts 4-amino-2-methyl-5-(diphosphooxymethyl)pyrimidine. 132 to 134 contacts 2-[(2R,5Z)-2-carboxy-4-methylthiazol-5(2H)-ylidene]ethyl phosphate; sequence TST. 4-amino-2-methyl-5-(diphosphooxymethyl)pyrimidine is bound at residue lysine 135. Residue glycine 162 coordinates 2-[(2R,5Z)-2-carboxy-4-methylthiazol-5(2H)-ylidene]ethyl phosphate.

It belongs to the thiamine-phosphate synthase family. Requires Mg(2+) as cofactor.

The enzyme catalyses 2-[(2R,5Z)-2-carboxy-4-methylthiazol-5(2H)-ylidene]ethyl phosphate + 4-amino-2-methyl-5-(diphosphooxymethyl)pyrimidine + 2 H(+) = thiamine phosphate + CO2 + diphosphate. The catalysed reaction is 2-(2-carboxy-4-methylthiazol-5-yl)ethyl phosphate + 4-amino-2-methyl-5-(diphosphooxymethyl)pyrimidine + 2 H(+) = thiamine phosphate + CO2 + diphosphate. It catalyses the reaction 4-methyl-5-(2-phosphooxyethyl)-thiazole + 4-amino-2-methyl-5-(diphosphooxymethyl)pyrimidine + H(+) = thiamine phosphate + diphosphate. The protein operates within cofactor biosynthesis; thiamine diphosphate biosynthesis; thiamine phosphate from 4-amino-2-methyl-5-diphosphomethylpyrimidine and 4-methyl-5-(2-phosphoethyl)-thiazole: step 1/1. In terms of biological role, condenses 4-methyl-5-(beta-hydroxyethyl)thiazole monophosphate (THZ-P) and 2-methyl-4-amino-5-hydroxymethyl pyrimidine pyrophosphate (HMP-PP) to form thiamine monophosphate (TMP). This chain is Thiamine-phosphate synthase 1, found in Aquifex aeolicus (strain VF5).